The following is a 948-amino-acid chain: Sensor histidine kinase RcsC (948 aa).

At 1 to 20 (MKYLASFRTTLKVSRYLFRA) the chain is on the cytoplasmic side. Residues 21–41 (LALLIWLLIAFVSVFYIVNAL) form a helical membrane-spanning segment. Over 42 to 313 (HQRESEIRQE…PVDLVLERIR (272 aa)) the chain is Periplasmic. Residues 314 to 334 (ILILNAILLNVLVGAGLFTLA) traverse the membrane as a helical segment. Residues 335-948 (RMYERRIFIP…YAERVRKTRA (614 aa)) lie on the Cytoplasmic side of the membrane. Positions 357 to 425 (QFNRKIVASA…VLTSNNTNLQ (69 aa)) constitute a PAS domain. A Histidine kinase domain is found at 476-692 (TVSHELRTPL…QFTLRIPLYG (217 aa)). Histidine 479 carries the phosphohistidine; by autocatalysis modification. The 101-residue stretch at 705–805 (AGTCCWLAVR…ARIYSIELDS (101 aa)) folds into the ABL domain. The region spanning 826-940 (MILVVDDHPI…VLKQTLAVYA (115 aa)) is the Response regulatory domain. 4-aspartylphosphate is present on aspartate 875.

This sequence belongs to the RcsC family. Interacts with RcsD. Post-translationally, autophosphorylated. Activation probably requires a transfer of a phosphate group from a His in the transmitter domain to an Asp in the receiver domain.

The protein localises to the cell inner membrane. The enzyme catalyses ATP + protein L-histidine = ADP + protein N-phospho-L-histidine.. Functionally, component of the Rcs signaling system, which controls transcription of numerous genes. RcsC functions as a membrane-associated protein kinase that phosphorylates RcsD in response to environmental signals. The phosphoryl group is then transferred to the response regulator RcsB. The protein is Sensor histidine kinase RcsC of Salmonella typhimurium (strain LT2 / SGSC1412 / ATCC 700720).